We begin with the raw amino-acid sequence, 620 residues long: Guanylate cyclase soluble subunit beta-1 (620 aa).

Position 105 (His-105) interacts with heme. The region spanning 421 to 554 (TILFSGIVGF…NTVNLTSRTE (134 aa)) is the Guanylate cyclase domain.

Belongs to the adenylyl cyclase class-4/guanylyl cyclase family. The active enzyme is formed by a heterodimer of an alpha and a beta subunit. Heterodimer with GUCY1A1. Can also form inactive homodimers in vitro. Heme serves as cofactor.

The protein localises to the cytoplasm. It catalyses the reaction GTP = 3',5'-cyclic GMP + diphosphate. Its activity is regulated as follows. Activated by nitric oxide in the presence of magnesium or manganese ions. Functionally, mediates responses to nitric oxide (NO) by catalyzing the biosynthesis of the signaling molecule cGMP. This Mus musculus (Mouse) protein is Guanylate cyclase soluble subunit beta-1 (Gucy1b1).